The primary structure comprises 465 residues: Ribulose bisphosphate carboxylase large chain (465 aa).

K4 carries the post-translational modification N6,N6,N6-trimethyllysine. Substrate contacts are provided by N113 and T163. The Proton acceptor role is filled by K165. K167 is a binding site for substrate. Mg(2+) is bound by residues K191, D193, and E194. N6-carboxylysine is present on K191. H284 serves as the catalytic Proton acceptor. Substrate is bound by residues R285, H317, and S369.

Belongs to the RuBisCO large chain family. Type I subfamily. As to quaternary structure, heterohexadecamer of 8 large chains and 8 small chains; disulfide-linked. The disulfide link is formed within the large subunit homodimers. Mg(2+) serves as cofactor. In terms of processing, the disulfide bond which can form in the large chain dimeric partners within the hexadecamer appears to be associated with oxidative stress and protein turnover.

The protein localises to the plastid. Its subcellular location is the chloroplast. It catalyses the reaction 2 (2R)-3-phosphoglycerate + 2 H(+) = D-ribulose 1,5-bisphosphate + CO2 + H2O. The enzyme catalyses D-ribulose 1,5-bisphosphate + O2 = 2-phosphoglycolate + (2R)-3-phosphoglycerate + 2 H(+). Functionally, ruBisCO catalyzes two reactions: the carboxylation of D-ribulose 1,5-bisphosphate, the primary event in carbon dioxide fixation, as well as the oxidative fragmentation of the pentose substrate in the photorespiration process. Both reactions occur simultaneously and in competition at the same active site. This is Ribulose bisphosphate carboxylase large chain from Byrsonima crassifolia (Cajuil cimarron).